A 429-amino-acid chain; its full sequence is MLLAGAIFVLTIVLVIWQPKGLGIGWSATLGAVLALVTGVVHPGDIPVVWNIVWNATAAFIAVIIISLLLDESGFFEWAALHVSRWGNGRGRLLFTWIVLLGAAVAALFANDGAALILTPIVIAMLLALGFSKGTTLAFVMAAGFIADTASLPLIVSNLVNIVSADFFGLGFREYASVMVPVDIAAIVATLVMLHLYFRKDIPQNYDMALLKSPAEAIKDPATFKTGWVVLLLLLVGFFVLEPLGIPVSAIAAVGALILFVVAKRGHAINTGKVLRGAPWQIVIFSLGMYLVVYGLRNAGLTEYLSGVLNVLADNGLWAATLGTGFLTAFLSSIMNNMPTVLVGALSIDGSTASGVIKEAMVYANVIGCDLGPKITPIGSLATLLWLHVLSQKNMTISWGYYFRTGIIMTLPVLFVTLAALALRLSFTL.

The Cytoplasmic portion of the chain corresponds to 1–20 (MLLAGAIFVLTIVLVIWQPK). The helical transmembrane segment at 21-41 (GLGIGWSATLGAVLALVTGVV) threads the bilayer. Topologically, residues 42–45 (HPGD) are periplasmic. A helical transmembrane segment spans residues 46 to 66 (IPVVWNIVWNATAAFIAVIII). At 67-97 (SLLLDESGFFEWAALHVSRWGNGRGRLLFTW) the chain is on the cytoplasmic side. A helical membrane pass occupies residues 98–118 (IVLLGAAVAALFANDGAALIL). The Periplasmic portion of the chain corresponds to 119 to 120 (TP). A helical membrane pass occupies residues 121–141 (IVIAMLLALGFSKGTTLAFVM). Residues 142-151 (AAGFIADTAS) lie on the Cytoplasmic side of the membrane. A helical transmembrane segment spans residues 152–172 (LPLIVSNLVNIVSADFFGLGF). Over 173–177 (REYAS) the chain is Periplasmic. A helical membrane pass occupies residues 178 to 198 (VMVPVDIAAIVATLVMLHLYF). Residues 199 to 227 (RKDIPQNYDMALLKSPAEAIKDPATFKTG) are Cytoplasmic-facing. 2 helical membrane-spanning segments follow: residues 228 to 248 (WVVL…GIPV) and 249 to 269 (SAIA…GHAI). Topologically, residues 270–273 (NTGK) are cytoplasmic. The helical transmembrane segment at 274–294 (VLRGAPWQIVIFSLGMYLVVY) threads the bilayer. Over 295–310 (GLRNAGLTEYLSGVLN) the chain is Periplasmic. Residues 311–331 (VLADNGLWAATLGTGFLTAFL) form a helical membrane-spanning segment. Residues 332-406 (SSIMNNMPTV…ISWGYYFRTG (75 aa)) are Cytoplasmic-facing. The chain crosses the membrane as a helical span at residues 407-427 (IIMTLPVLFVTLAALALRLSF). Residues 428–429 (TL) are Periplasmic-facing.

Belongs to the ArsB family.

It is found in the cell inner membrane. Its function is as follows. Involved in arsenical resistance. Thought to form the channel of an arsenite pump. The chain is Arsenical pump membrane protein (arsB) from Shigella flexneri.